Here is a 354-residue protein sequence, read N- to C-terminus: Guanine nucleotide-binding protein alpha-3 subunit (354 aa).

Glycine 2 carries N-myristoyl glycine lipidation. Cysteine 4 is lipidated: S-palmitoyl cysteine. Residues lysine 32–tyrosine 354 enclose the G-alpha domain. Residues lysine 35 to threonine 48 are G1 motif. Residues glycine 40–serine 47, leucine 176–threonine 182, aspartate 201–glutamine 205, asparagine 270–aspartate 273, and alanine 326 contribute to the GTP site. Residues serine 47 and threonine 182 each contribute to the Mg(2+) site. Residues aspartate 174–threonine 182 form a G2 motif region. The interval phenylalanine 197 to arginine 206 is G3 motif. Residues isoleucine 266 to aspartate 273 form a G4 motif region. A G5 motif region spans residues threonine 324–threonine 329.

This sequence belongs to the G-alpha family. G(q) subfamily. In terms of assembly, g proteins are composed of 3 units; alpha, beta and gamma. The alpha chain contains the guanine nucleotide binding site.

In terms of biological role, guanine nucleotide-binding proteins (G proteins) are involved as modulators or transducers in various transmembrane signaling systems. Promotes transcription of 3',5'-cyclic phosphodiesterases pde-1 and pde-5, leading to reduced cGMP levels in sensory neurons. This causes suppression of insulin production and signaling which leads to increased daf-16 activity and contributes to increased adult lifespan and resistance to oxidative stress. In addition, by reducing cGMP levels, inhibits TGF-beta signaling pathways. Involved in behavioral response to P.aeruginosa by controlling the expression of daf-7, a member of the TGF-beta family, in ASJ sensory neurons. This chain is Guanine nucleotide-binding protein alpha-3 subunit (gpa-3), found in Caenorhabditis briggsae.